The chain runs to 564 residues: Pyranose 2-oxidase (564 aa).

Positions 1 to 25 (MPIRLSKEKINDLLQRSQGDLTSSQ) are excised as a propeptide. His-158 is modified (tele-8alpha-FAD histidine). The substrate site is built by Gln-392 and His-394. The Proton acceptor role is filled by His-498. Asn-541 is an active-site residue.

This sequence belongs to the GMC oxidoreductase family. As to quaternary structure, homotetramer. The cofactor is FAD.

The enzyme catalyses D-glucose + O2 = 2-dehydro-D-glucose + H2O2. In terms of biological role, catalyzes the oxidation of various aldopyranoses and disaccharides on carbon-2 to the corresponding 2-keto sugars concomitant with the reduction of O(2) to H(2)O(2). The preferred substrate is D-glucose which is converted to 2-dehydro-D-glucose. Acts also on D-xylose, L-sorbose, D-galactose and 1,5-anhydroglucitol, a diagnostic marker of diabetes mellitus. In Tricholoma matsutake (Matsutake mushroom), this protein is Pyranose 2-oxidase (p2ox).